Consider the following 422-residue polypeptide: Serine--tRNA ligase (422 aa).

Thr-229–Glu-231 is a binding site for L-serine. Arg-260–Glu-262 contacts ATP. Position 283 (Glu-283) interacts with L-serine. Glu-347–Ser-350 lines the ATP pocket. An L-serine-binding site is contributed by Ser-383.

The protein belongs to the class-II aminoacyl-tRNA synthetase family. Type-1 seryl-tRNA synthetase subfamily. As to quaternary structure, homodimer. The tRNA molecule binds across the dimer.

It localises to the cytoplasm. The enzyme catalyses tRNA(Ser) + L-serine + ATP = L-seryl-tRNA(Ser) + AMP + diphosphate + H(+). The catalysed reaction is tRNA(Sec) + L-serine + ATP = L-seryl-tRNA(Sec) + AMP + diphosphate + H(+). Its pathway is aminoacyl-tRNA biosynthesis; selenocysteinyl-tRNA(Sec) biosynthesis; L-seryl-tRNA(Sec) from L-serine and tRNA(Sec): step 1/1. Its function is as follows. Catalyzes the attachment of serine to tRNA(Ser). Is also able to aminoacylate tRNA(Sec) with serine, to form the misacylated tRNA L-seryl-tRNA(Sec), which will be further converted into selenocysteinyl-tRNA(Sec). This Pelobacter propionicus (strain DSM 2379 / NBRC 103807 / OttBd1) protein is Serine--tRNA ligase.